The chain runs to 371 residues: Cytochrome b (371 aa).

A run of 4 helical transmembrane segments spans residues 25–45 (FGSM…FLAI), 69–90 (WTMQ…YTHI), 105–125 (WLSG…GYVL), and 170–190 (FFAL…VHII). Heme b-binding residues include H75 and H89. Residues H174 and H188 each coordinate heme b. An a ubiquinone-binding site is contributed by H193. The next 4 membrane-spanning stretches (helical) occupy residues 218–238 (YKDM…MSFS), 280–300 (LGGT…PFTH), 312–332 (FTQL…WTAT), and 339–358 (FILI…IINP).

This sequence belongs to the cytochrome b family. As to quaternary structure, the cytochrome bc1 complex contains 3 respiratory subunits (MT-CYB, CYC1 and UQCRFS1), 2 core proteins (UQCRC1 and UQCRC2) and probably 6 low-molecular weight proteins. Requires heme b as cofactor.

The protein resides in the mitochondrion inner membrane. Functionally, component of the ubiquinol-cytochrome c reductase complex (complex III or cytochrome b-c1 complex) that is part of the mitochondrial respiratory chain. The b-c1 complex mediates electron transfer from ubiquinol to cytochrome c. Contributes to the generation of a proton gradient across the mitochondrial membrane that is then used for ATP synthesis. This is Cytochrome b (MT-CYB) from Elapognathus coronatus (Western crowned snake).